The primary structure comprises 206 residues: Large ribosomal subunit protein uL4 (206 aa).

This sequence belongs to the universal ribosomal protein uL4 family. In terms of assembly, part of the 50S ribosomal subunit.

In terms of biological role, one of the primary rRNA binding proteins, this protein initially binds near the 5'-end of the 23S rRNA. It is important during the early stages of 50S assembly. It makes multiple contacts with different domains of the 23S rRNA in the assembled 50S subunit and ribosome. Forms part of the polypeptide exit tunnel. The sequence is that of Large ribosomal subunit protein uL4 from Cereibacter sphaeroides (strain ATCC 17025 / ATH 2.4.3) (Rhodobacter sphaeroides).